Here is a 101-residue protein sequence, read N- to C-terminus: Small ribosomal subunit protein uS14 (101 aa).

It belongs to the universal ribosomal protein uS14 family. In terms of assembly, part of the 30S ribosomal subunit. Contacts proteins S3 and S10.

Binds 16S rRNA, required for the assembly of 30S particles and may also be responsible for determining the conformation of the 16S rRNA at the A site. This chain is Small ribosomal subunit protein uS14, found in Phenylobacterium zucineum (strain HLK1).